The primary structure comprises 575 residues: Proline--tRNA ligase (575 aa).

This sequence belongs to the class-II aminoacyl-tRNA synthetase family. ProS type 1 subfamily. As to quaternary structure, homodimer.

The protein localises to the cytoplasm. The catalysed reaction is tRNA(Pro) + L-proline + ATP = L-prolyl-tRNA(Pro) + AMP + diphosphate. Its function is as follows. Catalyzes the attachment of proline to tRNA(Pro) in a two-step reaction: proline is first activated by ATP to form Pro-AMP and then transferred to the acceptor end of tRNA(Pro). As ProRS can inadvertently accommodate and process non-cognate amino acids such as alanine and cysteine, to avoid such errors it has two additional distinct editing activities against alanine. One activity is designated as 'pretransfer' editing and involves the tRNA(Pro)-independent hydrolysis of activated Ala-AMP. The other activity is designated 'posttransfer' editing and involves deacylation of mischarged Ala-tRNA(Pro). The misacylated Cys-tRNA(Pro) is not edited by ProRS. This chain is Proline--tRNA ligase, found in Heliobacterium modesticaldum (strain ATCC 51547 / Ice1).